Reading from the N-terminus, the 374-residue chain is Speckle-type POZ protein B (374 aa).

The MATH domain maps to 31-161 (KFSYMWTINN…DDKLTLFCEV (131 aa)). Positions 71–191 (VNPKGLDEES…PECRLSDELG (121 aa)) are required for nuclear localization. The 125-residue stretch at 173–297 (QNTMNMVKVP…MCEEALCSNL (125 aa)) folds into the BTB domain. The homodimerization stretch occupies residues 297-355 (LSVENAAEILILADLHSADQLKTQAVDFINYHASDVMETSGWKSMVVSHPHLVAEAYRS).

The protein belongs to the Tdpoz family. Homodimer. Part of cullin-RING-based BCR (BTB-CUL3-RBX1) E3 ubiquitin-protein ligase complexes that contain CUL3 and SPOP, plus a target protein.

Its subcellular location is the nucleus. It localises to the nucleus speckle. Its pathway is protein modification; protein ubiquitination. Functionally, component of a cullin-RING-based BCR (BTB-CUL3-RBX1) E3 ubiquitin-protein ligase complex that mediates the ubiquitination of target proteins, leading most often to their proteasomal degradation. The chain is Speckle-type POZ protein B (spop-b) from Xenopus laevis (African clawed frog).